Consider the following 226-residue polypeptide: Putative DNA repair protein recA homolog 4 (226 aa).

Residue 41–48 coordinates ATP; the sequence is GPEASGKT.

The protein belongs to the RecA family.

Its subcellular location is the cytoplasm. Involved in recombination ability and DNA strand transfer activity. The polypeptide is Putative DNA repair protein recA homolog 4 (Arabidopsis thaliana (Mouse-ear cress)).